The primary structure comprises 274 residues: Outer surface protein A (274 aa).

A signal peptide spans 1-16 (MKKYLLGIGLILALIA). Cys-17 carries N-palmitoyl cysteine lipidation. Cys-17 is lipidated: S-diacylglycerol cysteine.

It belongs to the OspA lipoprotein family.

It is found in the cell outer membrane. Its subcellular location is the cell surface. The protein is Outer surface protein A of Borreliella burgdorferi (Lyme disease spirochete).